A 574-amino-acid chain; its full sequence is Septation ring formation regulator EzrA (574 aa).

Residues 1–7 (MSIGLVI) are Extracellular-facing. Residues 8-26 (LVAVVALLLVVGYGTAVLM) form a helical membrane-spanning segment. 5 coiled-coil regions span residues 26–47 (MRKRNEALLQNLEERKEALYNL), 105–189 (KAKH…QFVT), 258–346 (ESRF…FLIS), 375–415 (SETK…IEKD), and 455–494 (STSNNIEELVKELEATRVNIESVNRWLEILGNDMEQLEEE). Topologically, residues 27–574 (RKRNEALLQN…YEKTRENIRF (548 aa)) are cytoplasmic.

The protein belongs to the EzrA family.

The protein resides in the cell membrane. Functionally, negative regulator of FtsZ ring formation; modulates the frequency and position of FtsZ ring formation. Inhibits FtsZ ring formation at polar sites. Interacts either with FtsZ or with one of its binding partners to promote depolymerization. This chain is Septation ring formation regulator EzrA, found in Streptococcus sanguinis (strain SK36).